Reading from the N-terminus, the 65-residue chain is Small ribosomal subunit protein bS21 (65 aa).

Residues 46–57 (RLKRSRSKRRAQ) show a composition bias toward basic residues. A disordered region spans residues 46–65 (RLKRSRSKRRAQRANEERNS).

Belongs to the bacterial ribosomal protein bS21 family.

The protein is Small ribosomal subunit protein bS21 of Chlorobaculum tepidum (strain ATCC 49652 / DSM 12025 / NBRC 103806 / TLS) (Chlorobium tepidum).